A 274-amino-acid polypeptide reads, in one-letter code: 2,3,4,5-tetrahydropyridine-2,6-dicarboxylate N-succinyltransferase (274 aa).

Residues arginine 104 and aspartate 141 each contribute to the substrate site.

It belongs to the transferase hexapeptide repeat family. As to quaternary structure, homotrimer.

It is found in the cytoplasm. It carries out the reaction (S)-2,3,4,5-tetrahydrodipicolinate + succinyl-CoA + H2O = (S)-2-succinylamino-6-oxoheptanedioate + CoA. It functions in the pathway amino-acid biosynthesis; L-lysine biosynthesis via DAP pathway; LL-2,6-diaminopimelate from (S)-tetrahydrodipicolinate (succinylase route): step 1/3. This chain is 2,3,4,5-tetrahydropyridine-2,6-dicarboxylate N-succinyltransferase, found in Shigella boydii serotype 4 (strain Sb227).